The sequence spans 445 residues: MEFTASPKPQLSSRANAFSIAALMSSGGPKEKEAAENTIKPLEQFVEKSSCAQPLGELTSLDAHAEFGGGGGSPSSSSLCTEPLIPTTPIIPSEEMAKIACSLETKELWDKFHELGTEMIITKSGRRMFPTIRVSFSGVDPESKYIVLMDIVPVDNKRYRYAYHRSSWLVAGKADPPLPARLYVHPDSPFTGEQLLKQMVSFEKVKLTNNELDQHGHIILNSMHKYQPRVHIIKKKDHTASLLNLKSEEFRTFIFPETVFTAVTAYQNQLITKLKIDSNPFAKGFRDSSRLTDIERESVESLIQKHSYARSPIRTYGEEDVLGEESQTTQSRGSAFTTSDNLSLSSWVSSSSSFPGFQHPQPLTALGTSTASIATPIPHPIQGSLPPYSRLGMPLTPSAIASSMQGSGPTFPSFHMPRYHHYFQQGPYAAIQGLRHSSAVMTPFV.

Positions 108–287 form a DNA-binding region, T-box; that stretch reads LWDKFHELGT…SNPFAKGFRD (180 aa). Positions 318–337 are disordered; sequence EEDVLGEESQTTQSRGSAFT. The span at 325–337 shows a compositional bias: polar residues; it reads ESQTTQSRGSAFT.

As to expression, prominently expressed in the extraembryonic mesoderm, developing heart, eye analage and motor neurons of hindbrain and spinal cord. Expressed in extraembryonic tissues such as the amnion and allantois.

Its subcellular location is the nucleus. Acts as a transcriptional activator and repressor required for cardiac development and may have key roles in the maintenance of functional and structural phenotypes in adult heart. The protein is T-box transcription factor TBX20 (Tbx20) of Mus musculus (Mouse).